Consider the following 352-residue polypeptide: Ion-translocating oxidoreductase complex subunit D (352 aa).

The next 4 helical transmembrane spans lie at 20–40, 42–62, 89–109, and 123–143; these read IMLL…CFFG, GTLV…ALVL, IPPL…VIIA, and PAMI…TSWL. Thr187 bears the FMN phosphoryl threonine mark. The next 5 membrane-spanning stretches (helical) occupy residues 215 to 235, 242 to 262, 267 to 287, 301 to 321, and 322 to 342; these read LAGA…VWLL, WHIP…GWLF, LAAP…FFIL, LIFG…GGYP, and DGVA…DYYT.

The protein belongs to the NqrB/RnfD family. In terms of assembly, the complex is composed of six subunits: RsxA, RsxB, RsxC, RsxD, RsxE and RsxG. Requires FMN as cofactor.

It is found in the cell inner membrane. Its function is as follows. Part of a membrane-bound complex that couples electron transfer with translocation of ions across the membrane. Required to maintain the reduced state of SoxR. This Escherichia coli O7:K1 (strain IAI39 / ExPEC) protein is Ion-translocating oxidoreductase complex subunit D.